We begin with the raw amino-acid sequence, 470 residues long: Uronate isomerase (470 aa).

Belongs to the metallo-dependent hydrolases superfamily. Uronate isomerase family.

It carries out the reaction D-glucuronate = D-fructuronate. It catalyses the reaction aldehydo-D-galacturonate = keto-D-tagaturonate. The protein operates within carbohydrate metabolism; pentose and glucuronate interconversion. The sequence is that of Uronate isomerase from Klebsiella pneumoniae (strain 342).